A 513-amino-acid polypeptide reads, in one-letter code: Putative ATP-dependent RNA helicase QP509L (513 aa).

The Helicase ATP-binding domain maps to 110–262 (KKLLSPYGRF…KIIIHHLGQP (153 aa)). Residue 123-130 (LNTGLGKT) coordinates ATP. The DEAH box motif lies at 215–218 (DEAH).

Belongs to the DEAD box helicase family. DEAH subfamily.

The enzyme catalyses ATP + H2O = ADP + phosphate + H(+). The sequence is that of Putative ATP-dependent RNA helicase QP509L from African swine fever virus (isolate Tick/South Africa/Pretoriuskop Pr4/1996) (ASFV).